A 192-amino-acid chain; its full sequence is BON1-associated protein 1 (192 aa).

The C2 domain occupies 1-119 (MIYFGRSIDN…RYSPEGHLNF (119 aa)).

Interacts with BON1 (via VWA domain), BON2 and BON3. As to expression, expressed in roots, leaves, stems and flowers.

It localises to the membrane. Functionally, negative regulator of cell death and defense responses. Exhibits calcium-dependent phospholipid binding properties. This is BON1-associated protein 1 (BAP1) from Arabidopsis thaliana (Mouse-ear cress).